The chain runs to 185 residues: ATP synthase subunit b (185 aa).

A helical membrane pass occupies residues 26–46 (LVLIGFAILLFIVIKFVVPMF).

It belongs to the ATPase B chain family. F-type ATPases have 2 components, F(1) - the catalytic core - and F(0) - the membrane proton channel. F(1) has five subunits: alpha(3), beta(3), gamma(1), delta(1), epsilon(1). F(0) has three main subunits: a(1), b(2) and c(10-14). The alpha and beta chains form an alternating ring which encloses part of the gamma chain. F(1) is attached to F(0) by a central stalk formed by the gamma and epsilon chains, while a peripheral stalk is formed by the delta and b chains.

The protein localises to the cell membrane. In terms of biological role, f(1)F(0) ATP synthase produces ATP from ADP in the presence of a proton or sodium gradient. F-type ATPases consist of two structural domains, F(1) containing the extramembraneous catalytic core and F(0) containing the membrane proton channel, linked together by a central stalk and a peripheral stalk. During catalysis, ATP synthesis in the catalytic domain of F(1) is coupled via a rotary mechanism of the central stalk subunits to proton translocation. Functionally, component of the F(0) channel, it forms part of the peripheral stalk, linking F(1) to F(0). This chain is ATP synthase subunit b, found in Renibacterium salmoninarum (strain ATCC 33209 / DSM 20767 / JCM 11484 / NBRC 15589 / NCIMB 2235).